A 179-amino-acid polypeptide reads, in one-letter code: Large ribosomal subunit protein uL5 (179 aa).

This sequence belongs to the universal ribosomal protein uL5 family. Part of the 50S ribosomal subunit; part of the 5S rRNA/L5/L18/L25 subcomplex. Contacts the 5S rRNA and the P site tRNA. Forms a bridge to the 30S subunit in the 70S ribosome.

Functionally, this is one of the proteins that bind and probably mediate the attachment of the 5S RNA into the large ribosomal subunit, where it forms part of the central protuberance. In the 70S ribosome it contacts protein S13 of the 30S subunit (bridge B1b), connecting the 2 subunits; this bridge is implicated in subunit movement. Contacts the P site tRNA; the 5S rRNA and some of its associated proteins might help stabilize positioning of ribosome-bound tRNAs. The sequence is that of Large ribosomal subunit protein uL5 from Shouchella clausii (strain KSM-K16) (Alkalihalobacillus clausii).